A 510-amino-acid chain; its full sequence is uncharacterized protein (510 aa).

A run of 12 helical transmembrane segments spans residues 17 to 37 (LKLG…LVVL), 56 to 76 (LIIH…ASVW), 111 to 131 (VLYI…ISPL), 148 to 168 (IVFI…AINI), 180 to 200 (LVNV…VCFG), 223 to 243 (LLFW…LIFI), 261 to 281 (FYLF…FGHI), 300 to 320 (YLGG…LVLM), 355 to 375 (IIKT…LIAI), 382 to 402 (LVIP…CMGY), 434 to 454 (AIYL…FSGI), and 472 to 492 (LLMG…LMFV).

To A.aeolicus AQ_155.

The protein localises to the cell membrane. This is an uncharacterized protein from Rickettsia prowazekii (strain Madrid E).